Reading from the N-terminus, the 570-residue chain is Sulfite reductase [NADPH] hemoprotein beta-component (570 aa).

[4Fe-4S] cluster is bound by residues Cys434, Cys440, Cys479, and Cys483. Cys483 provides a ligand contact to siroheme.

It belongs to the nitrite and sulfite reductase 4Fe-4S domain family. As to quaternary structure, alpha(8)-beta(8). The alpha component is a flavoprotein, the beta component is a hemoprotein. Siroheme serves as cofactor. [4Fe-4S] cluster is required as a cofactor.

It carries out the reaction hydrogen sulfide + 3 NADP(+) + 3 H2O = sulfite + 3 NADPH + 4 H(+). The protein operates within sulfur metabolism; hydrogen sulfide biosynthesis; hydrogen sulfide from sulfite (NADPH route): step 1/1. Functionally, component of the sulfite reductase complex that catalyzes the 6-electron reduction of sulfite to sulfide. This is one of several activities required for the biosynthesis of L-cysteine from sulfate. The protein is Sulfite reductase [NADPH] hemoprotein beta-component of Salmonella agona (strain SL483).